We begin with the raw amino-acid sequence, 134 residues long: Profilin-1 (134 aa).

A disulfide bridge links C13 with C118. The Involved in PIP2 interaction motif lies at 84–100; that stretch reads AVIRGKKGSGGITTKKT. T114 carries the phosphothreonine modification.

It belongs to the profilin family. Occurs in many kinds of cells as a complex with monomeric actin in a 1:1 ratio. Post-translationally, phosphorylated by MAP kinases.

It localises to the cytoplasm. The protein resides in the cytoskeleton. Functionally, binds to actin and affects the structure of the cytoskeleton. At high concentrations, profilin prevents the polymerization of actin, whereas it enhances it at low concentrations. The polypeptide is Profilin-1 (Olea europaea (Common olive)).